A 471-amino-acid polypeptide reads, in one-letter code: A-type ATP synthase subunit B (471 aa).

This sequence belongs to the ATPase alpha/beta chains family. In terms of assembly, has multiple subunits with at least A(3), B(3), C, D, E, F, H, I and proteolipid K(x).

It localises to the cell membrane. Its function is as follows. Component of the A-type ATP synthase that produces ATP from ADP in the presence of a proton gradient across the membrane. The B chain is a regulatory subunit. This Halobacterium salinarum (strain ATCC 29341 / DSM 671 / R1) protein is A-type ATP synthase subunit B.